The sequence spans 90 residues: Probable Fe(2+)-trafficking protein (90 aa).

Belongs to the Fe(2+)-trafficking protein family.

Functionally, could be a mediator in iron transactions between iron acquisition and iron-requiring processes, such as synthesis and/or repair of Fe-S clusters in biosynthetic enzymes. This is Probable Fe(2+)-trafficking protein from Aeromonas salmonicida (strain A449).